The chain runs to 686 residues: tRNA (guanine(37)-N(1))-methyltransferase (686 aa).

The segment at 206–244 is disordered; it reads GGPSSVSLTEDTDGSEQPQGLPRAAAAPPPPSNKRRASY. Residues His-428, 466–467, 495–496, and Asn-530 contribute to the S-adenosyl-L-methionine site; these read DL and DG.

It belongs to the class I-like SAM-binding methyltransferase superfamily. TRM5/TYW2 family. In terms of assembly, monomer.

It localises to the mitochondrion matrix. The protein resides in the nucleus. It is found in the cytoplasm. The enzyme catalyses guanosine(37) in tRNA + S-adenosyl-L-methionine = N(1)-methylguanosine(37) in tRNA + S-adenosyl-L-homocysteine + H(+). Specifically methylates the N1 position of guanosine-37 in various cytoplasmic and mitochondrial tRNAs. Methylation is not dependent on the nature of the nucleoside 5' of the target nucleoside. This is the first step in the biosynthesis of wybutosine (yW), a modified base adjacent to the anticodon of tRNAs and required for accurate decoding. This is tRNA (guanine(37)-N(1))-methyltransferase from Leishmania major.